Reading from the N-terminus, the 426-residue chain is Histidine--tRNA ligase (426 aa).

The protein belongs to the class-II aminoacyl-tRNA synthetase family. As to quaternary structure, homodimer.

The protein resides in the cytoplasm. It carries out the reaction tRNA(His) + L-histidine + ATP = L-histidyl-tRNA(His) + AMP + diphosphate + H(+). This is Histidine--tRNA ligase from Streptococcus pyogenes serotype M28 (strain MGAS6180).